The sequence spans 210 residues: Insulin receptor (210 aa).

Residues 1-96 (VSNSSSQIIL…SQILKELEES (96 aa)) enclose the Fibronectin type-III domain. 3 N-linked (GlcNAc...) asparagine glycosylation sites follow: asparagine 3, asparagine 21, and asparagine 68. A disordered region spans residues 55–78 (WSPPFESEDSQKHNQSEYEDSAGE). The segment at 103 to 111 (EDYLHNVVF) is insulin-binding. The tract at residues 116 to 169 (TSSGTGAEDPRPSRKRRSLGDVGNVTVAVPTVAAFPNTSSTSTPTSPEEHRPFE) is disordered. At 133-210 (SLGDVGNVTV…EERCSVAAYV (78 aa)) the chain is on the extracellular side. Positions 137–161 (VGNVTVAVPTVAAFPNTSSTSTPTS) are enriched in low complexity. Asparagine 139 and asparagine 152 each carry an N-linked (GlcNAc...) asparagine glycan. Cysteine 195 and cysteine 204 are joined by a disulfide.

It belongs to the protein kinase superfamily. Tyr protein kinase family. Insulin receptor subfamily. Tetramer of 2 alpha and 2 beta chains linked by disulfide bonds. The alpha chains carry the insulin-binding regions, while the beta chains carry the kinase domain. Forms a hybrid receptor with IGF1R, the hybrid is a tetramer consisting of 1 alpha chain and 1 beta chain of INSR and 1 alpha chain and 1 beta chain of IGF1R. Interacts with SORBS1 but dissociates from it following insulin stimulation. Binds SH2B2. Activated form of INSR interacts (via phosphorylated Tyrosine) with the PTB/PID domains of IRS1 and SHC1. The sequences surrounding the phosphorylated NPXY motif contribute differentially to either IRS1 or SHC1 recognition. Interacts (via tyrosines in the C-terminus) with IRS2 (via PTB domain and 591-786 AA); the 591-786 would be the primary anchor of IRS2 to INSR while the PTB domain would have a stabilizing action on the interaction with INSR. Interacts with the SH2 domains of the 85 kDa regulatory subunit of PI3K (PIK3R1) in vitro, when autophosphorylated on tyrosine residues. Interacts with SOCS7. Interacts with SOCS3. Interacts with SOCS1. Interacts with CAV2 (tyrosine-phosphorylated form); the interaction is increased with 'Tyr-27'phosphorylation of CAV2. Interacts with ARRB2. Interacts with GRB10; this interaction blocks the association between IRS1/IRS2 and INSR, significantly reduces insulin-stimulated tyrosine phosphorylation of IRS1 and IRS2 and thus decreases insulin signaling. Interacts with GRB7. Interacts with PDPK1. Interacts with GRB14 (via BPS domain). Interacts (via subunit alpha) with ENPP1 (via 485-599 AA); this interaction blocks autophosphorylation. Interacts with PTPRE. Interacts with STAT5B (via SH2 domain). Interacts with PTPRF. Interacts with ATIC; ATIC together with PRKAA2/AMPK2 and HACD3/PTPLAD1 is proposed to be part of a signaling netwok regulating INSR autophosphorylation and endocytosis. Interacts with the insulin receptor SORL1; this interaction strongly increases its surface exposure, hence strengthens insulin signal reception. Interacts (tyrosine phosphorylated) with CCDC88A/GIV (via SH2-like region); binding requires autophosphorylation of the INSR C-terminal region. Interacts with GNAI3; the interaction is probably mediated by CCDC88A/GIV. Interacts with LMBRD1. Interacts (in response to insulin stimulation) with NCK1; this interaction may recruit PTPN1 to mediate INSR dephosphorylation. Post-translationally, after being transported from the endoplasmic reticulum to the Golgi apparatus, the single glycosylated precursor is further glycosylated and then cleaved, followed by its transport to the plasma membrane. In terms of processing, autophosphorylated on tyrosine residues in response to insulin. Dephosphorylated by PTPN1, PTPRE and PTPRF. Dephosphorylated by PTPN2; down-regulates insulin-induced signaling. S-nitrosylation by BLVRB inhibits the receptor tyrosine kinase, thereby inhibiting insulin signaling.

It localises to the cell membrane. The protein resides in the late endosome. Its subcellular location is the lysosome. It catalyses the reaction L-tyrosyl-[protein] + ATP = O-phospho-L-tyrosyl-[protein] + ADP + H(+). Activated in response to insulin. Autophosphorylation activates the kinase activity. PTPN1, PTPRE and PTPRF dephosphorylate important tyrosine residues, thereby reducing INSR activity. Inhibited by ENPP1. GRB10 and GRB14 inhibit the catalytic activity of the INSR, they block access of substrates to the activated receptor. SOCS1 and SOCS3 act as negative regulators of INSR activity, they bind to the activated INRS and interfere with the phosphorylation of INSR substrates. Receptor tyrosine kinase which mediates the pleiotropic actions of insulin. Binding of insulin leads to phosphorylation of several intracellular substrates, including, insulin receptor substrates (IRS1, 2, 3, 4), SHC, GAB1, CBL and other signaling intermediates. Each of these phosphorylated proteins serve as docking proteins for other signaling proteins that contain Src-homology-2 domains (SH2 domain) that specifically recognize different phosphotyrosine residues, including the p85 regulatory subunit of PI3K and SHP2. Phosphorylation of IRSs proteins lead to the activation of two main signaling pathways: the PI3K-AKT/PKB pathway, which is responsible for most of the metabolic actions of insulin, and the Ras-MAPK pathway, which regulates expression of some genes and cooperates with the PI3K pathway to control cell growth and differentiation. Binding of the SH2 domains of PI3K to phosphotyrosines on IRS1 leads to the activation of PI3K and the generation of phosphatidylinositol-(3, 4, 5)-triphosphate (PIP3), a lipid second messenger, which activates several PIP3-dependent serine/threonine kinases, such as PDPK1 and subsequently AKT/PKB. The net effect of this pathway is to produce a translocation of the glucose transporter SLC2A4/GLUT4 from cytoplasmic vesicles to the cell membrane to facilitate glucose transport. Moreover, upon insulin stimulation, activated AKT/PKB is responsible for: anti-apoptotic effect of insulin by inducing phosphorylation of BAD; regulates the expression of gluconeogenic and lipogenic enzymes by controlling the activity of the winged helix or forkhead (FOX) class of transcription factors. Another pathway regulated by PI3K-AKT/PKB activation is mTORC1 signaling pathway which regulates cell growth and metabolism and integrates signals from insulin. AKT mediates insulin-stimulated protein synthesis by phosphorylating TSC2 thereby activating mTORC1 pathway. The Ras/RAF/MAP2K/MAPK pathway is mainly involved in mediating cell growth, survival and cellular differentiation of insulin. Phosphorylated IRS1 recruits GRB2/SOS complex, which triggers the activation of the Ras/RAF/MAP2K/MAPK pathway. In addition to binding insulin, the insulin receptor can bind insulin-like growth factors (IGFI and IGFII). When present in a hybrid receptor with IGF1R, binds IGF1. In adipocytes, inhibits lipolysis. The chain is Insulin receptor (INSR) from Macaca mulatta (Rhesus macaque).